We begin with the raw amino-acid sequence, 444 residues long: MSKTYHFIGIKGSGMSALALMLHQMGHKVQGSDVEKYYFTQRGLEQAGITILPFDEKNLDGDMEIIAGNAFRPDNNVEIAYADQNGISYKRYHEFLGSFMRDFVSMGVAGAHGKTSTTGMLSHVLSHITDTSFLIGDGTGRGSANAKYFVFESDEYERHFMPYHPEYSIITNIDFDHPDYFTSLEDVFNAFNDYAKQITKGLFVYGEDAELRKITSDAPIYYYGFEAEGNDFVASDLLRSITGSTFTVHFRGQNLGQFHIPTFGRHNIMNATAVIGLLYTAGFDLNLVREHLKTFAGVKRRFTEKIVNDTVIIDDFAHHPTEIIATLDAARQKYPSKEIVAVFQPHTFTRTIALLDDFAHALNQADAVYLAQIYGSAREVDHGDVKVEDLANKINKKHQVITVENVSPLLDHDNAVYVFMGAGDIQTYEYSFERLLSNLTSNVQ.

110-116 (GAHGKTS) lines the ATP pocket.

Belongs to the MurCDEF family. In terms of processing, phosphorylated by StkP in vitro. Dephosphorylated by PhpP in vitro.

It is found in the cytoplasm. It catalyses the reaction UDP-N-acetyl-alpha-D-muramate + L-alanine + ATP = UDP-N-acetyl-alpha-D-muramoyl-L-alanine + ADP + phosphate + H(+). It functions in the pathway cell wall biogenesis; peptidoglycan biosynthesis. Functionally, cell wall formation. The chain is UDP-N-acetylmuramate--L-alanine ligase from Streptococcus pneumoniae serotype 4 (strain ATCC BAA-334 / TIGR4).